The sequence spans 67 residues: Small ribosomal subunit protein bS21 (67 aa).

The protein belongs to the bacterial ribosomal protein bS21 family.

The chain is Small ribosomal subunit protein bS21 (rpsU) from Aquifex aeolicus (strain VF5).